Consider the following 1274-residue polypeptide: Myosin-binding protein C, cardiac-type (1274 aa).

Met1 bears the N-acetylmethionine mark. Positions Pro8–Thr95 constitute an Ig-like C2-type 1 domain. Ser47 is subject to Phosphoserine. Basic and acidic residues predominate over residues Thr95–Glu104. The disordered stretch occupies residues Thr95–Ala153. The residue at position 117 (Thr117) is a Phosphothreonine. Positions Leu128–Gly149 are enriched in polar residues. One can recognise an Ig-like C2-type 2 domain in the interval Pro157–Thr259. 4 residues coordinate Zn(2+): Gln212, His214, Glu227, and His229. A Phosphoserine modification is found at Ser279. The residue at position 287 (Thr287) is a Phosphothreonine; by PKA and PKC. Ser288 carries the phosphoserine modification. Ser307 bears the Phosphoserine; by PKA mark. 2 positions are modified to phosphoserine: Ser312 and Ser427. Ig-like C2-type domains follow at residues Lys361–Pro452 and Pro452–Glu546. Cysteines 436 and 443 form a disulfide. A phosphoserine mark is found at Ser459 and Ser550. Thr607 carries the phosphothreonine modification. Residues Pro645–Thr765 enclose the Ig-like C2-type 5 domain. Fibronectin type-III domains lie at Ala774–Pro870 and Glu872–Ile967. The Ig-like C2-type 6 domain occupies Pro971–Val1059. A Fibronectin type-III 3 domain is found at Pro1068–Pro1163. Residues Pro1181–Glu1269 form the Ig-like C2-type 7 domain. Arg1241 carries the post-translational modification Omega-N-methylarginine.

Belongs to the immunoglobulin superfamily. MyBP family. Post-translationally, substrate for phosphorylation by PKA and PKC. Reversible phosphorylation appears to modulate contraction. Polyubiquitinated.

Functionally, thick filament-associated protein located in the crossbridge region of vertebrate striated muscle a bands. In vitro it binds MHC, F-actin and native thin filaments, and modifies the activity of actin-activated myosin ATPase. It may modulate muscle contraction or may play a more structural role. The sequence is that of Myosin-binding protein C, cardiac-type (Mybpc3) from Rattus norvegicus (Rat).